A 445-amino-acid chain; its full sequence is Phosphoglucosamine mutase (445 aa).

Ser101 acts as the Phosphoserine intermediate in catalysis. The Mg(2+) site is built by Ser101, Asp240, Asp242, and Asp244. Ser101 is modified (phosphoserine).

The protein belongs to the phosphohexose mutase family. Mg(2+) is required as a cofactor. Activated by phosphorylation.

The catalysed reaction is alpha-D-glucosamine 1-phosphate = D-glucosamine 6-phosphate. Its function is as follows. Catalyzes the conversion of glucosamine-6-phosphate to glucosamine-1-phosphate. This chain is Phosphoglucosamine mutase, found in Pseudomonas fluorescens (strain ATCC BAA-477 / NRRL B-23932 / Pf-5).